We begin with the raw amino-acid sequence, 439 residues long: GTPase Obg (439 aa).

One can recognise an Obg domain in the interval 3-162 (GEFYDSARIF…REIELELKLL (160 aa)). Residues 163-333 (ADVGLIGFPN…LLQRVAERLR (171 aa)) form the OBG-type G domain. Residues 169–176 (GFPNAGKS), 194–198 (FTTLQ), 215–218 (DIPG), 285–288 (NKAD), and 314–316 (SAA) each bind GTP. Mg(2+) contacts are provided by serine 176 and threonine 196. An OCT domain is found at 351–428 (VPEVDERLYT…IEQAAFDWED (78 aa)).

The protein belongs to the TRAFAC class OBG-HflX-like GTPase superfamily. OBG GTPase family. As to quaternary structure, monomer. Mg(2+) serves as cofactor.

The protein localises to the cytoplasm. In terms of biological role, an essential GTPase which binds GTP, GDP and possibly (p)ppGpp with moderate affinity, with high nucleotide exchange rates and a fairly low GTP hydrolysis rate. Plays a role in control of the cell cycle, stress response, ribosome biogenesis and in those bacteria that undergo differentiation, in morphogenesis control. The protein is GTPase Obg of Roseiflexus castenholzii (strain DSM 13941 / HLO8).